The sequence spans 367 residues: Terpene cyclase verU1 (367 aa).

The chain crosses the membrane as a helical span at residues 8–28 (IRCSLLLLGLVGIYTVWISSF). N-linked (GlcNAc...) asparagine glycosylation occurs at asparagine 50. 8 helical membrane-spanning segments follow: residues 57 to 77 (FTGI…YWPV), 85 to 105 (LSLI…LFAL), 120 to 140 (MAMF…PIYC), 169 to 189 (CLLG…PAVV), 197 to 217 (IIAL…LTHL), 239 to 259 (ISAM…SLLA), 292 to 312 (FQWD…GLHI), and 327 to 347 (LIPE…AALY). Asparagine 352 carries an N-linked (GlcNAc...) asparagine glycan.

The protein belongs to the membrane-bound ascI terpene cyclase family.

Its subcellular location is the membrane. Its pathway is secondary metabolite biosynthesis; terpenoid biosynthesis. The protein operates within mycotoxin biosynthesis. Terpene cyclase; part of the gene cluster that mediates the biosynthesis of the neurotoxin verrucosidin, a methylated alpha-pyrone polyketide that inhibits oxidative phosphorylation in mitochondria and thereby causes neurological diseases. The carbon backbone of verrucosidin is synthesized by the HR-PKS verA, and further modified by the other verrucodidin cluster enzymes. In Penicillium polonicum, this protein is Terpene cyclase verU1.